A 389-amino-acid polypeptide reads, in one-letter code: Chalcone synthase 4 (389 aa).

Cys164 is a catalytic residue.

This sequence belongs to the thiolase-like superfamily. Chalcone/stilbene synthases family.

The enzyme catalyses (E)-4-coumaroyl-CoA + 3 malonyl-CoA + 3 H(+) = 2',4,4',6'-tetrahydroxychalcone + 3 CO2 + 4 CoA. Its pathway is secondary metabolite biosynthesis; flavonoid biosynthesis. Its function is as follows. The primary product of this enzyme is 4,2',4',6'-tetrahydroxychalcone (also termed naringenin-chalcone or chalcone) which can under specific conditions spontaneously isomerize into naringenin. The protein is Chalcone synthase 4 (CHS4) of Medicago sativa (Alfalfa).